We begin with the raw amino-acid sequence, 616 residues long: MALLQISEPGLSAAPHQRRLAAGIDLGTTNSLVATVRSGQAETLPDHEGRHLLPSVVHYQQQGHTVGYAARDNAAQDTANTISSVKRMMGRSLADIQARYPHLPYRFKASVNGLPMIDTAAGLLNPVRVSADILKALAARASESLSGELDGVVITVPAYFDDAQRQGTKDAARLAGLHVLRLLNEPTAAAIAYGLDSGKEGVIAVYDLGGGTFDISILRLSRGVFEVLATGGDSALGGDDFDHLLADYIREQAGIADRSDNRVQRELLDAAIAAKIALSDADTVRVNVAGWQGEITREQFNDLISALVKRTLLACRRALKDAGVDPQDVLEVVMVGGSTRVPLVRERVGEFFGRTPLTAIDPDKVVAIGAAIQADILVGNKPDSEMLLLDVIPLSLGLETMGGLVEKVIPRNTTIPVARAQDFTTFKDGQTAMSIHVMQGERELVQDCRSLARFALRGIPPLPAGGAHIRVTFQVDADGLLSVTAMEKSTGVEASIQVKPSYGLTDSEIASMIKDSMSFAEQDVKARMLAEQKVEAARVLESLTGALTADAALLSAAERQCIDDAAAHLSAVAQGDDVDAIEQAIKNVDKQTQEFAARRMDQSVRRALKGHSVDEV.

It belongs to the heat shock protein 70 family.

In terms of biological role, chaperone involved in the maturation of iron-sulfur cluster-containing proteins. Has a low intrinsic ATPase activity which is markedly stimulated by HscB. Involved in the maturation of IscU. This chain is Chaperone protein HscA, found in Salmonella heidelberg (strain SL476).